We begin with the raw amino-acid sequence, 162 residues long: Putative ethylene-responsive transcription factor ERF121 (162 aa).

3 disordered regions span residues 1 to 21 (MDYSENVQNKNFTPISQPPNL), 84 to 103 (IKQEKKHKGVRKKPSGKWSA), and 139 to 162 (KRSARRGSKKGEGSIHQEVGGGDD). The span at 87-98 (EKKHKGVRKKPS) shows a compositional bias: basic residues. A DNA-binding region (AP2/ERF) is located at residues 89-146 (KHKGVRKKPSGKWSAEIWDPSTRTRRWLGTFPTAEMAADAYDEAAAALVEKRSARRGS).

This sequence belongs to the AP2/ERF transcription factor family. ERF subfamily.

The protein resides in the nucleus. Probably acts as a transcriptional activator. Binds to the GCC-box pathogenesis-related promoter element. May be involved in the regulation of gene expression by stress factors and by components of stress signal transduction pathways. The protein is Putative ethylene-responsive transcription factor ERF121 (ERF121) of Arabidopsis thaliana (Mouse-ear cress).